The following is a 121-amino-acid chain: Protein VraC (121 aa).

In Staphylococcus aureus (strain MRSA252), this protein is Protein VraC (vraC).